We begin with the raw amino-acid sequence, 239 residues long: Probable transcriptional regulatory protein BPUM_0743 (239 aa).

Belongs to the TACO1 family. YeeN subfamily.

The protein resides in the cytoplasm. The sequence is that of Probable transcriptional regulatory protein BPUM_0743 from Bacillus pumilus (strain SAFR-032).